Here is a 459-residue protein sequence, read N- to C-terminus: Cysteine--tRNA ligase (459 aa).

Residue Cys27 participates in Zn(2+) binding. The short motif at 29-39 is the 'HIGH' region element; sequence VTVYDDCHIGH. 3 residues coordinate Zn(2+): Cys208, His233, and Glu237. The 'KMSKS' region signature appears at 265-269; the sequence is KMSKS. ATP is bound at residue Lys268.

The protein belongs to the class-I aminoacyl-tRNA synthetase family. Monomer. Zn(2+) serves as cofactor.

Its subcellular location is the cytoplasm. The enzyme catalyses tRNA(Cys) + L-cysteine + ATP = L-cysteinyl-tRNA(Cys) + AMP + diphosphate. The protein is Cysteine--tRNA ligase of Francisella tularensis subsp. mediasiatica (strain FSC147).